Here is a 73-residue protein sequence, read N- to C-terminus: V-type proton ATPase subunit e (73 aa).

The Lumenal segment spans residues 1 to 3; it reads MSS. The helical transmembrane segment at 4–24 threads the bilayer; it reads FYTVVGVFIVVSAMSVLFWIM. At 25 to 35 the chain is on the cytoplasmic side; sequence APKNNQAVWRS. The helical transmembrane segment at 36 to 56 threads the bilayer; sequence TVILTLAMMFLMWAITFLCQL. Over 57–73 the chain is Lumenal; the sequence is HPLVAPRRSDLRPEFAE.

This sequence belongs to the V-ATPase e1/e2 subunit family. In terms of assembly, V-ATPase is a heteromultimeric enzyme composed of a peripheral catalytic V1 complex (components A to H) attached to an integral membrane V0 proton pore complex (components: a, c, c', c'', d, e, f and VOA1).

It is found in the vacuole membrane. Functionally, subunit of the V0 complex of vacuolar(H+)-ATPase (V-ATPase), a multisubunit enzyme composed of a peripheral complex (V1) that hydrolyzes ATP and a membrane integral complex (V0) that translocates protons. V-ATPase is responsible for acidifying and maintaining the pH of intracellular compartments. This is V-type proton ATPase subunit e (VMA9) from Saccharomyces cerevisiae (strain ATCC 204508 / S288c) (Baker's yeast).